Reading from the N-terminus, the 207-residue chain is Ribosomal RNA small subunit methyltransferase G (207 aa).

S-adenosyl-L-methionine contacts are provided by residues Gly73, Leu78, 124–125 (VE), and Arg139.

It belongs to the methyltransferase superfamily. RNA methyltransferase RsmG family.

It localises to the cytoplasm. The catalysed reaction is guanosine(527) in 16S rRNA + S-adenosyl-L-methionine = N(7)-methylguanosine(527) in 16S rRNA + S-adenosyl-L-homocysteine. In terms of biological role, specifically methylates the N7 position of guanine in position 527 of 16S rRNA. This chain is Ribosomal RNA small subunit methyltransferase G, found in Salmonella schwarzengrund (strain CVM19633).